Reading from the N-terminus, the 543-residue chain is Cytochrome P450 52A1 (543 aa).

Residues 1–28 (MSSSPSIAQEFLATITPYVEYCQENYTK) lie on the Lumenal side of the membrane. The helical transmembrane segment at 29 to 48 (WYYFIPLVILSLNLISMLHT) threads the bilayer. The Cytoplasmic portion of the chain corresponds to 49–543 (KYLERKFKAK…GAEVQMYLIL (495 aa)). C487 is a heme binding site.

This sequence belongs to the cytochrome P450 family. Heme serves as cofactor.

Its subcellular location is the endoplasmic reticulum membrane. Functionally, together with an NADPH cytochrome P450 the enzyme system catalyzes the terminal hydroxylation as the first step in the assimilation of alkanes and fatty acids. This chain is Cytochrome P450 52A1 (CYP52A1), found in Candida tropicalis (Yeast).